A 139-amino-acid chain; its full sequence is MGMMQEFKEFAVKGNVVDLAVAVIVGAAFGKIVDSLVQDVIMPVVGKIFGGLDFSNYYIALNNQDPNLTLVEAKKLGAVLAYGNFITIALNFIILAFIIFQMVRLLNKLKRTEPPAPEEPAAVPEDIALLREIRDSLKK.

The next 3 helical transmembrane spans lie at 10–30 (FAVKGNVVDLAVAVIVGAAFG), 40–60 (VIMPVVGKIFGGLDFSNYYIA), and 80–100 (LAYGNFITIALNFIILAFIIF).

Belongs to the MscL family. Homopentamer.

The protein resides in the cell inner membrane. Its function is as follows. Channel that opens in response to stretch forces in the membrane lipid bilayer. May participate in the regulation of osmotic pressure changes within the cell. This Janthinobacterium sp. (strain Marseille) (Minibacterium massiliensis) protein is Large-conductance mechanosensitive channel.